An 856-amino-acid polypeptide reads, in one-letter code: V-type proton ATPase 116 kDa subunit a 2 (856 aa).

The Cytoplasmic segment spans residues 1-393 (MGSLFRSETM…DAYGVGSYRE (393 aa)). Residues 394 to 412 (VNPALFTIITFPFLFAVMF) form a helical membrane-spanning segment. Residues 413–414 (GD) lie on the Vacuolar side of the membrane. Residues 415 to 431 (FGHGFVMFLFALLLVLN) traverse the membrane as a helical segment. Over 432–445 (ENHPRLNQSQEIMR) the chain is Cytoplasmic. The chain crosses the membrane as a helical span at residues 446–475 (MFFNGRYILLLMGLFSVYTGLIYNDCFSKS). The Vacuolar segment spans residues 476–549 (VNLFGSGWNV…ATNRLTFLNS (74 aa)). Residues asparagine 484 and asparagine 505 are each glycosylated (N-linked (GlcNAc...) asparagine). A helical transmembrane segment spans residues 550–569 (FKMKMSVILGIIHMTFGVIL). Residues 570–587 (GIFNHLHFRKKFNIYLVS) lie on the Cytoplasmic side of the membrane. The chain crosses the membrane as a helical span at residues 588–608 (IPELLFMLCIFGYLIFMIFYK). Topologically, residues 609–651 (WLVFSAETSRVAPSILIEFINMFLFPASKTSGLYTGQEYVQRV) are vacuolar. The chain crosses the membrane as a helical span at residues 652-671 (LLVVTALSVPVLFLGKPLFL). Topologically, residues 672–739 (LWLHNGRSCF…EILMTQVIHS (68 aa)) are cytoplasmic. Phosphoserine occurs at positions 695 and 700. Residues 740–764 (IEYCLGCISNTASYLRLWALSLAHA) traverse the membrane as a helical segment. At 765 to 785 (QLSDVLWAMLMRVGLRVDTTY) the chain is on the vacuolar side. Residues 786-824 (GVLLLLPVIALFAVLTIFILLIMEGLSAFLHAIRLHWVE) traverse the membrane as a helical segment. Residues 825 to 856 (FQNKFYVGAGTKFVPFSFSLLSSKFNNDDSVA) are Cytoplasmic-facing.

This sequence belongs to the V-ATPase 116 kDa subunit family. In terms of assembly, V-ATPase is a heteromultimeric enzyme made up of two complexes: the ATP-hydrolytic V1 complex and the proton translocation V0 complex. The V1 complex consists of three catalytic AB heterodimers that form a heterohexamer, three peripheral stalks each consisting of EG heterodimers, one central rotor including subunits D and F, and the regulatory subunits C and H. The proton translocation complex V0 consists of the proton transport subunit a, a ring of proteolipid subunits c9c'', rotary subunit d, subunits e and f, and the accessory subunits ATP6AP1/Ac45 and ATP6AP2/PRR. Directly interacts with PSCD2 through its N-terminal cytosolic tail in an intra-endosomal acidification-dependent manner. Disruption of this interaction results in the inhibition of endocytosis. Interacts with SPAAR.

The protein localises to the cell membrane. Its subcellular location is the endosome membrane. Subunit of the V0 complex of vacuolar(H+)-ATPase (V-ATPase), a multisubunit enzyme composed of a peripheral complex (V1) that hydrolyzes ATP and a membrane integral complex (V0) that translocates protons. V-ATPase is responsible for acidifying and maintaining the pH of intracellular compartments and in some cell types, is targeted to the plasma membrane, where it is responsible for acidifying the extracellular environment. Essential component of the endosomal pH-sensing machinery. May play a role in maintaining the Golgi functions, such as glycosylation maturation, by controlling the Golgi pH. In aerobic conditions, involved in intracellular iron homeostasis, thus triggering the activity of Fe(2+) prolyl hydroxylase (PHD) enzymes, and leading to HIF1A hydroxylation and subsequent proteasomal degradation. The chain is V-type proton ATPase 116 kDa subunit a 2 (ATP6V0A2) from Homo sapiens (Human).